A 432-amino-acid polypeptide reads, in one-letter code: Trigger factor (432 aa).

A PPIase FKBP-type domain is found at 161 to 246 (EDRVTLDFTG…LKKVEERELP (86 aa)).

Belongs to the FKBP-type PPIase family. Tig subfamily.

It is found in the cytoplasm. It catalyses the reaction [protein]-peptidylproline (omega=180) = [protein]-peptidylproline (omega=0). Its function is as follows. Involved in protein export. Acts as a chaperone by maintaining the newly synthesized protein in an open conformation. Functions as a peptidyl-prolyl cis-trans isomerase. The polypeptide is Trigger factor (Salmonella arizonae (strain ATCC BAA-731 / CDC346-86 / RSK2980)).